The primary structure comprises 131 residues: D-ribose pyranase (131 aa).

Residue His-20 is the Proton donor of the active site. Residues Asp-28, His-98, and 120-122 (YSN) contribute to the substrate site.

It belongs to the RbsD / FucU family. RbsD subfamily. As to quaternary structure, homodecamer.

The protein localises to the cytoplasm. It carries out the reaction beta-D-ribopyranose = beta-D-ribofuranose. It participates in carbohydrate metabolism; D-ribose degradation; D-ribose 5-phosphate from beta-D-ribopyranose: step 1/2. Catalyzes the interconversion of beta-pyran and beta-furan forms of D-ribose. This is D-ribose pyranase from Limosilactobacillus fermentum (strain NBRC 3956 / LMG 18251) (Lactobacillus fermentum).